A 119-amino-acid chain; its full sequence is Large ribosomal subunit protein uL22c (119 aa).

This sequence belongs to the universal ribosomal protein uL22 family. As to quaternary structure, part of the 50S ribosomal subunit.

It is found in the plastid. The protein localises to the chloroplast. In terms of biological role, this protein binds specifically to 23S rRNA. Its function is as follows. The globular domain of the protein is located near the polypeptide exit tunnel on the outside of the subunit, while an extended beta-hairpin is found that lines the wall of the exit tunnel in the center of the 70S ribosome. The protein is Large ribosomal subunit protein uL22c (rpl22) of Mesostigma viride (Green alga).